Reading from the N-terminus, the 428-residue chain is Glutamate-1-semialdehyde 2,1-aminomutase (428 aa).

K265 bears the N6-(pyridoxal phosphate)lysine mark.

It belongs to the class-III pyridoxal-phosphate-dependent aminotransferase family. HemL subfamily. As to quaternary structure, homodimer. Requires pyridoxal 5'-phosphate as cofactor.

It localises to the cytoplasm. It catalyses the reaction (S)-4-amino-5-oxopentanoate = 5-aminolevulinate. The protein operates within porphyrin-containing compound metabolism; protoporphyrin-IX biosynthesis; 5-aminolevulinate from L-glutamyl-tRNA(Glu): step 2/2. The protein is Glutamate-1-semialdehyde 2,1-aminomutase of Legionella pneumophila (strain Paris).